Reading from the N-terminus, the 193-residue chain is Probable GTP-binding protein EngB (193 aa).

Positions 22 to 193 constitute an EngB-type G domain; it reads LLPEVALAGR…AAWEAIYRHL (172 aa). Residues 30 to 37, 57 to 61, 75 to 78, 142 to 145, and 174 to 176 each bind GTP; these read GRSNVGKS, GKTQT, DVPG, TKLD, and FSS. Positions 37 and 59 each coordinate Mg(2+).

It belongs to the TRAFAC class TrmE-Era-EngA-EngB-Septin-like GTPase superfamily. EngB GTPase family. Requires Mg(2+) as cofactor.

Its function is as follows. Necessary for normal cell division and for the maintenance of normal septation. In Exiguobacterium sibiricum (strain DSM 17290 / CCUG 55495 / CIP 109462 / JCM 13490 / 255-15), this protein is Probable GTP-binding protein EngB.